A 146-amino-acid polypeptide reads, in one-letter code: Snake venom vascular endothelial growth factor toxin (146 aa).

An N-terminal signal peptide occupies residues 1–24; it reads MAAYLLAVAILFCIQGWPLGTVQG. At Gln25 the chain carries Pyrrolidone carboxylic acid. Intrachain disulfides connect Cys38/Cys80, Cys69/Cys115, and Cys73/Cys117. The interval 119 to 146 is disordered; that stretch reads PRSASGVNSRKHKRNPEEGEPRAKFPFV. The span at 133 to 146 shows a compositional bias: basic and acidic residues; that stretch reads NPEEGEPRAKFPFV.

Belongs to the PDGF/VEGF growth factor family. Snake venom VEGF subfamily. As to quaternary structure, homodimer; disulfide-linked. Interacts with VEGF receptor-1 (FLT1) with a high affinity, whereas it binds to VEGF receptor-2 (KDR) with a low affinity. Does not bind VEGF receptor-3 (FLT4). As to expression, expressed by the venom gland.

It localises to the secreted. Functionally, snake venom VEGFs may contribute to venom dispersion and prey subjugation by inducing vascular permeability and hypotension. This protein induces vascular permeability probably through VEGF (VEGFR) signaling. This protein also induces a drastic hypotensive effect after intravenous injection. The hypotension is mediated by nitric oxide (NO), which is produced by VEGF-activated endothelium NO synthase. Also induces angiogenesis in vitro. Like other crotalid VEGFs, this protein interacts with VEGF receptor-1 (FLT1) with a high affinity, whereas it binds to VEGF receptor-2 (KDR) with a low affinity. This chain is Snake venom vascular endothelial growth factor toxin, found in Bothrops insularis (Golden lancehead).